The following is a 62-amino-acid chain: Large ribosomal subunit protein uL29 (62 aa).

Belongs to the universal ribosomal protein uL29 family.

The sequence is that of Large ribosomal subunit protein uL29 from Geobacter sp. (strain M21).